The sequence spans 455 residues: T-box protein VegT-B (455 aa).

Residues 57–230 (LWTQFHQEGT…HNPFAKGFRE (174 aa)) constitute a DNA-binding region (T-box). Basic and acidic residues predominate over residues 229 to 241 (REQERSHKRDDVL). Disordered regions lie at residues 229–276 (REQE…RIKE) and 295–350 (ANQG…RRLT). Positions 308–326 (GVNQEQQVPTSSSNFYIKS) are enriched in polar residues.

As to quaternary structure, forms a repression complex on the promoters of the nodal/nr1 and siamois genes with the maternal factors tcf7l1/tcf3 and pouf5.1/oct-25. Interacts (via C-terminus) with tcf7l1/tcf3 (via N-terminus). Also interacts with the other POU-domain transcription factors pou5f1.2/oct-91 and pou5f1.3/oct-60. As to expression, maternally localized to the vegetal hemisphere of oocytes. Zygotic expression parallels blastopore formation and shifts from dorsal expression in the marginal zone of late blastula and early gastrula stages to a ventral/lateral expression at later stages. During neurula and tailbud stages, expressed in the posterior and anterior ends of the embryo. During tailbud stages, expressed in a subset of interneurons in the neural tube.

The protein resides in the nucleus. Its function is as follows. Transcription factor required for both mesoderm and endoderm formation in the embryo; signaling determinants and concentration levels may determine which germ layer is formed. Acts together with beta-catenin to activate genes that are responsible for mesoderm induction including wnt-8, eomes t/bra, siamois, mix1 and sox17. Directly binds to promoter DNA. Patterns the mesoderm along the dorsoventral and posterior axis. Activates siamois gene transcription when alone or in combination with beta-catenin, but inhibits siamois transcription in combination with pou5f1.1/oct-25. The protein is T-box protein VegT-B (vegt-b) of Xenopus laevis (African clawed frog).